A 502-amino-acid chain; its full sequence is Probable cytosol aminopeptidase (502 aa).

2 residues coordinate Mn(2+): Lys258 and Asp263. Lys270 is a catalytic residue. Asp281, Asp340, and Glu342 together coordinate Mn(2+). Residue Arg344 is part of the active site.

It belongs to the peptidase M17 family. Mn(2+) serves as cofactor.

The protein resides in the cytoplasm. It carries out the reaction Release of an N-terminal amino acid, Xaa-|-Yaa-, in which Xaa is preferably Leu, but may be other amino acids including Pro although not Arg or Lys, and Yaa may be Pro. Amino acid amides and methyl esters are also readily hydrolyzed, but rates on arylamides are exceedingly low.. The catalysed reaction is Release of an N-terminal amino acid, preferentially leucine, but not glutamic or aspartic acids.. Functionally, presumably involved in the processing and regular turnover of intracellular proteins. Catalyzes the removal of unsubstituted N-terminal amino acids from various peptides. The chain is Probable cytosol aminopeptidase from Clavibacter michiganensis subsp. michiganensis (strain NCPPB 382).